Here is a 338-residue protein sequence, read N- to C-terminus: MTTLRLLISDSYDPWFNLAVEECIFRQMPATQRVLFLWRNADTVVIGRAQNPWKECNTRRMEEDNVRLARRSSGGGAVFHDLGNTCFTFMAGKPEYDKTISTAIVLKALNSLGVNAEASGRNDLVVKTREGDRKVSGSAYRETKDRGFHHGTLLLNADLSRLANYLNPDKKKLQAKGITSVRGRVANLVELMPGITHEQICDAIREAFFEHYSERVEAEIISPDKTPDLPNFAETFARQSSWEWNFGQAPAFSHLLDERFTWGGVELHFDVERGHITRTQVFTDSLNPAPLEALAARLQGCVYRAETLKQECDALVVDFPEQETELRELSHWIAQAVR.

In terms of domain architecture, BPL/LPL catalytic spans 29-216 (PATQRVLFLW…AFFEHYSERV (188 aa)). ATP is bound by residues R71, 76–79 (GAVF), and K134. K134 lines the (R)-lipoate pocket.

The protein belongs to the LplA family. Monomer.

The protein localises to the cytoplasm. It catalyses the reaction L-lysyl-[lipoyl-carrier protein] + (R)-lipoate + ATP = N(6)-[(R)-lipoyl]-L-lysyl-[lipoyl-carrier protein] + AMP + diphosphate + H(+). It functions in the pathway protein modification; protein lipoylation via exogenous pathway; protein N(6)-(lipoyl)lysine from lipoate: step 1/2. Its pathway is protein modification; protein lipoylation via exogenous pathway; protein N(6)-(lipoyl)lysine from lipoate: step 2/2. In terms of biological role, catalyzes both the ATP-dependent activation of exogenously supplied lipoate to lipoyl-AMP and the transfer of the activated lipoyl onto the lipoyl domains of lipoate-dependent enzymes. The protein is Lipoate-protein ligase A of Enterobacter sp. (strain 638).